We begin with the raw amino-acid sequence, 42 residues long: Large ribosomal subunit protein bL36 (42 aa).

Belongs to the bacterial ribosomal protein bL36 family.

The sequence is that of Large ribosomal subunit protein bL36 from Ehrlichia ruminantium (strain Gardel).